A 572-amino-acid chain; its full sequence is MLGLLTITSVFRNWRNSLQRKEDYDECHMRGINNENEISGKSEKNFKLDEPPISLETVMAEFKLSNETLRRMMAHMSRNMDKGLEGGPENSTISMLPSFVPELPNGTEEGRFIAMDLGGTNLRVMLMDIKPGEELKTEQFNTRIPNWAMRGTGEQLFDYITKCLAEFLIEKGIENDGLPVGFTFSYPCDQKSLRSATLLRWTKGFETTGVVGEDVVELLEQSIARRGDIKVEVVALINDTVGTMVAAAHESGGECHIGVIIATGTNASYMEDTSKIKYGLSKAIAAYNYPEMIIDTEWGGFGDRSEADYILTQYDKIVDSRSEHPGVNTFDKLVGGKCMGEVVRVVLEKLTRARVLFNGKGSDALFQQDSFPTKYISEILRDESGSYVHTRDILGELGIDHYSFSDMLLLREVCVVVSRRSANLGAAAIACVLNRVRKQNMVVGIDGSTYKYHPFFDFWVHDKLKELVDPGLKFKLLQTADGSGKGAALITAIVARLKKRNLKQQQQQQQQQQQHVTMVEQNVVEQIAETKGSREQFMNGNQKINLVTNDIPIYDSFNGDIENGVIHLSTDH.

Positions Asp-49–Ala-492 constitute a Hexokinase domain. The hexokinase small subdomain stretch occupies residues Asn-105 to Ile-237. Residues Asp-116–Thr-120 and Ser-185 contribute to the D-glucose 6-phosphate site. Position 116–121 (Asp-116–Asn-121) interacts with ATP. Substrate-binding positions include Ser-185 to Tyr-186, Thr-202 to Lys-203, and Asn-238 to Asp-239. The segment at Asn-238–Asp-481 is hexokinase large subdomain. Positions 239 and 263 each coordinate D-glucose 6-phosphate. Residue Thr-263 coordinates ATP. Residues Asn-266, Glu-297, and Asp-331 each coordinate substrate. ATP is bound by residues Gly-336–Lys-337, Thr-373–Ser-377, and Ser-448–Tyr-452. D-glucose 6-phosphate contacts are provided by residues Asp-446–Ser-448 and Ser-483.

Belongs to the hexokinase family.

It catalyses the reaction a D-hexose + ATP = a D-hexose 6-phosphate + ADP + H(+). It carries out the reaction D-mannose + ATP = D-mannose 6-phosphate + ADP + H(+). The enzyme catalyses D-fructose + ATP = D-fructose 6-phosphate + ADP + H(+). The catalysed reaction is D-glucose + ATP = D-glucose 6-phosphate + ADP + H(+). Its pathway is carbohydrate metabolism; hexose metabolism. The protein operates within carbohydrate degradation; glycolysis; D-glyceraldehyde 3-phosphate and glycerone phosphate from D-glucose: step 1/4. With respect to regulation, activated by glucose-6-phosphate. Inhibited by N-acetylglucosamine, glucosamine, mannoheptulose and ADP. Its function is as follows. Active against glucose, fructose, mannose, maltose and galactose. In Brugia malayi (Filarial nematode worm), this protein is Hexokinase.